The primary structure comprises 201 residues: Large ribosomal subunit protein uL4 (201 aa).

The tract at residues 44–66 (KAQKTRAEVRGGGKKPWRQKGTG) is disordered. The segment covering 55–66 (GGKKPWRQKGTG) has biased composition (basic residues).

This sequence belongs to the universal ribosomal protein uL4 family. As to quaternary structure, part of the 50S ribosomal subunit.

One of the primary rRNA binding proteins, this protein initially binds near the 5'-end of the 23S rRNA. It is important during the early stages of 50S assembly. It makes multiple contacts with different domains of the 23S rRNA in the assembled 50S subunit and ribosome. Its function is as follows. Forms part of the polypeptide exit tunnel. In Alteromonas mediterranea (strain DSM 17117 / CIP 110805 / LMG 28347 / Deep ecotype), this protein is Large ribosomal subunit protein uL4.